Consider the following 235-residue polypeptide: Ubiquinone/menaquinone biosynthesis C-methyltransferase UbiE (235 aa).

Positions 59, 84, and 123 each coordinate S-adenosyl-L-methionine.

The protein belongs to the class I-like SAM-binding methyltransferase superfamily. MenG/UbiE family.

The catalysed reaction is a 2-demethylmenaquinol + S-adenosyl-L-methionine = a menaquinol + S-adenosyl-L-homocysteine + H(+). The enzyme catalyses a 2-methoxy-6-(all-trans-polyprenyl)benzene-1,4-diol + S-adenosyl-L-methionine = a 5-methoxy-2-methyl-3-(all-trans-polyprenyl)benzene-1,4-diol + S-adenosyl-L-homocysteine + H(+). Its pathway is quinol/quinone metabolism; menaquinone biosynthesis; menaquinol from 1,4-dihydroxy-2-naphthoate: step 2/2. The protein operates within cofactor biosynthesis; ubiquinone biosynthesis. Methyltransferase required for the conversion of demethylmenaquinol (DMKH2) to menaquinol (MKH2) and the conversion of 2-polyprenyl-6-methoxy-1,4-benzoquinol (DDMQH2) to 2-polyprenyl-3-methyl-6-methoxy-1,4-benzoquinol (DMQH2). The chain is Ubiquinone/menaquinone biosynthesis C-methyltransferase UbiE from Campylobacter jejuni subsp. jejuni serotype O:23/36 (strain 81-176).